Here is a 570-residue protein sequence, read N- to C-terminus: Nucleoprotein (570 aa).

The tract at residues 54–241 is binding site for the cap structure m7GTP; that stretch reads MRKEKRDDSD…IEPKKSAINI (188 aa). Mn(2+) contacts are provided by D390 and E392. Zn(2+) is bound by residues E400, C507, H510, and C530. D534 provides a ligand contact to Mn(2+).

Belongs to the arenaviridae nucleocapsid protein family. In terms of assembly, homomultimerizes to form the nucleocapsid. Binds to viral genomic RNA. Interacts with glycoprotein G2. Interacts with protein Z; this interaction probably directs the encapsidated genome to budding sites. Interacts with protein L; this interaction does not interfere with Z-L interaction. Interacts with host IKBKE (via Protein kinase domain); the interaction inhibits IKBKE kinase activity.

It localises to the virion. The protein localises to the host cytoplasm. Functionally, encapsidates the genome, protecting it from nucleases. The encapsidated genomic RNA is termed the nucleocapsid (NC). Serves as template for viral transcription and replication. The increased presence of protein N in host cell does not seem to trigger the switch from transcription to replication as observed in other negative strain RNA viruses. Through the interaction with host IKBKE, strongly inhibits the phosphorylation and nuclear translocation of host IRF3, a protein involved in interferon activation pathway, leading to the inhibition of interferon-beta and IRF3-dependent promoters activation. Also encodes a functional 3'-5' exoribonuclease that degrades preferentially dsRNA substrates and thereby participates in the suppression of interferon induction. The polypeptide is Nucleoprotein (Mopeia virus (MOPV)).